An 848-amino-acid chain; its full sequence is Phosphatidate phosphatase LPIN3 (848 aa).

Residues 1–108 (MNYVGQLAET…VPPRLCTSPI (108 aa)) are N-LIP. Disordered stretches follow at residues 97–233 (EDVP…SPLR), 271–298 (PEEP…PGVR), and 314–373 (AVDS…NQHL). Residues 135–144 (GRRKRRRRRK) carry the Nuclear localization signal motif. A compositionally biased stretch (basic residues) spans 135–146 (GRRKRRRRRKPR). Over residues 151 to 164 (DAVDSSSEELEAGA) the composition is skewed to acidic residues. A phosphoserine mark is found at Ser-155 and Ser-156. The segment covering 165 to 191 (ESELTLLEKPTPESPSAQEAEEPSSQP) has biased composition (low complexity). At Ser-218 the chain carries Phosphoserine. Low complexity predominate over residues 271–282 (PEEPSPSSSPSE). Residues 342-358 (KSWSWTTPESHTPSGHP) are compositionally biased toward polar residues. Phosphoserine is present on Ser-460. Residues 536–556 (EEHSSQREKAATRKQQGEKTE) are compositionally biased toward basic and acidic residues. Residues 536-568 (EEHSSQREKAATRKQQGEKTEVLSSDDDVPDSP) are disordered. Residues 587–789 (YKKSLRLSSD…RIFTVNPRGE (203 aa)) are C-LIP. The DXDXT motif signature appears at 641-645 (DIDGT). The LXXIL motif motif lies at 652–656 (LGHIL).

It belongs to the lipin family. Mg(2+) serves as cofactor. In terms of tissue distribution, significant expression in intestine and other regions of the gastrointestinal tract.

It localises to the nucleus. The enzyme catalyses a 1,2-diacyl-sn-glycero-3-phosphate + H2O = a 1,2-diacyl-sn-glycerol + phosphate. With respect to regulation, inhibited by N-ethylmaleimide. In terms of biological role, magnesium-dependent phosphatidate phosphatase enzyme which catalyzes the conversion of phosphatidic acid to diacylglycerol during triglyceride, phosphatidylcholine and phosphatidylethanolamine biosynthesis therefore regulates fatty acid metabolism. The polypeptide is Phosphatidate phosphatase LPIN3 (Mus musculus (Mouse)).